The following is a 559-amino-acid chain: MLSDIEIAGAATLRPITEVATESLGIGAEHLVPYGHYKAKVGITYLNSLADRPLGRLILVTALSPTPPGEGKTTTSVGLTDALHGLGKRAIACLREPSMGPVFGLKGGAAGGGYSQVVPMTDINLHFTGDFAAIAAANNLLAALIDNHVHHGNELDIDVRSVTWKRVLDTNDRALREVVVGLGGPPNGFPRQDGFDIVVASELMAIFCLTESWADLKRRIGDIVIGYSRAGAPVTARDLGADGAMAVLLRDAIAPNLVQTLEGAPALVHGGPFANIAHGCSSVMATRAGLRLADYVVTEAGFGADLGAEKFIDIKCRMSGMRPDVAVVVATVRALKYHGGVALADLDREDLGAVEAGMDNLRRHLDNLRHLNGVPCVVAVNRFPTDTDLEVVRVVELAASYGVPAYQATHFTDGGIGAQDLAKGVLQALEEPARDEFSFTYPDELSLTEKVEAVATRVYGAGQVTWDGKARKRLARIERDGYGTLPVCVAKTQYSFSTDPGLLGAPTGHELRVREVRLSAGAGFVVVICGDMMTMPGLPTRPAATRIDLADDGTIIGLS.

66 to 73 (TPPGEGKT) contributes to the ATP binding site.

The protein belongs to the formate--tetrahydrofolate ligase family.

It catalyses the reaction (6S)-5,6,7,8-tetrahydrofolate + formate + ATP = (6R)-10-formyltetrahydrofolate + ADP + phosphate. It functions in the pathway one-carbon metabolism; tetrahydrofolate interconversion. In Nocardioides sp. (strain ATCC BAA-499 / JS614), this protein is Formate--tetrahydrofolate ligase.